A 559-amino-acid polypeptide reads, in one-letter code: uncharacterized protein (559 aa).

The next 11 helical transmembrane spans lie at L103–F123, F139–Y159, A192–F212, F223–L243, W263–V283, M302–A322, A348–D368, I387–I407, A413–A434, A466–N486, and I501–F521.

Belongs to the purine-cytosine permease (2.A.39) family.

Its subcellular location is the golgi apparatus membrane. This is an uncharacterized protein from Schizosaccharomyces pombe (strain 972 / ATCC 24843) (Fission yeast).